A 332-amino-acid chain; its full sequence is Geranylgeranyl diphosphate synthase (332 aa).

Isopentenyl diphosphate-binding residues include lysine 45, arginine 48, and histidine 77. Aspartate 84 and aspartate 88 together coordinate Mg(2+). Arginine 93 serves as a coordination point for an all-trans-polyprenyl diphosphate. Arginine 94 contacts isopentenyl diphosphate. Residues lysine 177, threonine 178, glutamine 215, lysine 232, and lysine 242 each contribute to the an all-trans-polyprenyl diphosphate site.

Belongs to the FPP/GGPP synthase family. Requires Mg(2+) as cofactor.

The enzyme catalyses isopentenyl diphosphate + (2E,6E)-farnesyl diphosphate = (2E,6E,10E)-geranylgeranyl diphosphate + diphosphate. The protein operates within isoprenoid biosynthesis; geranylgeranyl diphosphate biosynthesis; geranylgeranyl diphosphate from farnesyl diphosphate and isopentenyl diphosphate: step 1/1. Functionally, catalyzes the condensation of isopentenyl pyrophosphate with the allylic pyrophosphates to yield geranylgeranyl diphosphate (GGPP) which is a precursor of the ether-linked lipids. This Saccharolobus solfataricus (strain ATCC 35092 / DSM 1617 / JCM 11322 / P2) (Sulfolobus solfataricus) protein is Geranylgeranyl diphosphate synthase (gds).